The primary structure comprises 181 residues: Ribosome-recycling factor (181 aa).

Belongs to the RRF family.

It localises to the cytoplasm. Responsible for the release of ribosomes from messenger RNA at the termination of protein biosynthesis. May increase the efficiency of translation by recycling ribosomes from one round of translation to another. The sequence is that of Ribosome-recycling factor from Tropheryma whipplei (strain TW08/27) (Whipple's bacillus).